The chain runs to 1048 residues: Putative cation efflux system protein SilA (1048 aa).

14 helical membrane-spanning segments follow: residues 14-34, 125-145, 338-358, 363-383, 391-411, 446-466, 485-505, 539-559, 737-757, 871-891, 897-917, 928-948, 985-1005, and 1012-1032; these read FLVM…IINT, VSSE…YALV, LSSK…LFLW, ALVA…VMHF, MSLG…IVMI, VGPA…PIFT, SMAG…GFWI, TLLV…QVGG, GMTV…AMVG, KLKL…YLAF, ALLI…FLYW, TGFI…LMYL, AMTV…TGAG, and IAAP…FIIP.

The protein belongs to the resistance-nodulation-cell division (RND) (TC 2.A.6) family.

Its subcellular location is the cell inner membrane. Component of the sil cation-efflux system that confers resistance to silver. May be part of a three-component cation/proton antiporter. The polypeptide is Putative cation efflux system protein SilA (silA) (Salmonella typhimurium).